The sequence spans 109 residues: Probable glutaredoxin slr1562 (109 aa).

The 99-residue stretch at 11-109 (LSGRQADGIK…PLLATPPNPA (99 aa)) folds into the Glutaredoxin domain. C31 and C34 are disulfide-bonded.

This sequence belongs to the glutaredoxin family.

Functionally, has a glutathione-disulfide oxidoreductase activity in the presence of NADPH and glutathione reductase. Reduces low molecular weight disulfides and proteins. In Synechocystis sp. (strain ATCC 27184 / PCC 6803 / Kazusa), this protein is Probable glutaredoxin slr1562.